The chain runs to 427 residues: Inorganic pyrophosphatase 1 (427 aa).

Residues 36-52 (SSSSNTATTSTSSSNTS) are compositionally biased toward low complexity. 2 disordered regions span residues 36–63 (SSSS…TSRP) and 77–118 (SMDS…RSLH). Composition is skewed to polar residues over residues 53–63 (QKWATSRTSRP) and 77–114 (SMDS…ANSE). Positions 259, 264, and 296 each coordinate Mg(2+).

This sequence belongs to the PPase family. It depends on Mg(2+) as a cofactor. As to expression, expressed in coelomocytes, the intestine and in the nervous system including the nerve cords and sensory neurons.

It localises to the cytoplasm. It carries out the reaction diphosphate + H2O = 2 phosphate + H(+). Its function is as follows. Catalyzes the hydrolysis of inorganic pyrophosphate (PPi) forming two phosphate ions. Plays a role in intestinal development and subsequent normal secretory, digestive and absorption functions. Required for larval development. The sequence is that of Inorganic pyrophosphatase 1 from Caenorhabditis elegans.